A 193-amino-acid chain; its full sequence is Acyl carrier protein phosphodiesterase (193 aa).

Belongs to the AcpH family.

It carries out the reaction holo-[ACP] + H2O = apo-[ACP] + (R)-4'-phosphopantetheine + H(+). Its function is as follows. Converts holo-ACP to apo-ACP by hydrolytic cleavage of the phosphopantetheine prosthetic group from ACP. The protein is Acyl carrier protein phosphodiesterase of Escherichia coli O139:H28 (strain E24377A / ETEC).